Reading from the N-terminus, the 381-residue chain is Sensor histidine kinase FlgS (381 aa).

The 205-residue stretch at 177-381 folds into the Histidine kinase domain; sequence HLAHEIRNPV…TFEIKILNAS (205 aa). Position 180 is a phosphohistidine; by autocatalysis (histidine 180).

Interacts (via its C-terminal kinase domain) with FlhA (via N-terminus). In terms of processing, autophosphorylated.

The enzyme catalyses ATP + protein L-histidine = ADP + protein N-phospho-L-histidine.. Functionally, member of the two-component regulatory system FlgR/FlgS that induces the transcriptional induction of the genes needed in motility and flagellar biogenesis. Also plays an essential role in bacterial survival at pH 2.5 independently of FlgR. Functions as a sensor protein kinase which is autophosphorylated at a histidine residue and transfers its phosphate group to the conserved aspartic acid residue in the regulatory domain of FlgR. In turn, FlgR functions as a transcriptional regulator initiating transcription from RpoN-dependent promoters. This Helicobacter pylori (strain ATCC 700392 / 26695) (Campylobacter pylori) protein is Sensor histidine kinase FlgS (flgS).